A 1002-amino-acid polypeptide reads, in one-letter code: MKLLLLLLLLLLLHISHSFTVAKPITELHALLSLKSSFTIDEHSPLLTSWNLSTTFCSWTGVTCDVSLRHVTSLDLSGLNLSGTLSSDVAHLPLLQNLSLAANQISGPIPPQISNLYELRHLNLSNNVFNGSFPDELSSGLVNLRVLDLYNNNLTGDLPVSLTNLTQLRHLHLGGNYFSGKIPATYGTWPVLEYLAVSGNELTGKIPPEIGNLTTLRELYIGYYNAFENGLPPEIGNLSELVRFDAANCGLTGEIPPEIGKLQKLDTLFLQVNAFTGTITQELGLISSLKSMDLSNNMFTGEIPTSFSQLKNLTLLNLFRNKLYGAIPEFIGEMPELEVLQLWENNFTGSIPQKLGENGRLVILDLSSNKLTGTLPPNMCSGNRLMTLITLGNFLFGSIPDSLGKCESLTRIRMGENFLNGSIPKELFGLPKLSQVELQDNYLTGELPISGGGVSGDLGQISLSNNQLSGSLPAAIGNLSGVQKLLLDGNKFSGSIPPEIGRLQQLSKLDFSHNLFSGRIAPEISRCKLLTFVDLSRNELSGDIPNELTGMKILNYLNLSRNHLVGSIPVTIASMQSLTSVDFSYNNLSGLVPSTGQFSYFNYTSFVGNSHLCGPYLGPCGKGTHQSHVKPLSATTKLLLVLGLLFCSMVFAIVAIIKARSLRNASEAKAWRLTAFQRLDFTCDDVLDSLKEDNIIGKGGAGIVYKGTMPKGDLVAVKRLATMSHGSSHDHGFNAEIQTLGRIRHRHIVRLLGFCSNHETNLLVYEYMPNGSLGEVLHGKKGGHLHWNTRYKIALEAAKGLCYLHHDCSPLIVHRDVKSNNILLDSNFEAHVADFGLAKFLQDSGTSECMSAIAGSYGYIAPEYAYTLKVDEKSDVYSFGVVLLELITGKKPVGEFGDGVDIVQWVRSMTDSNKDCVLKVIDLRLSSVPVHEVTHVFYVALLCVEEQAVERPTMREVVQILTEIPKIPLSKQQAAESDVTEKAPAINESSPDSGSPPDLLSN.

A signal peptide spans 1 to 22 (MKLLLLLLLLLLLHISHSFTVA). At 23 to 636 (KPITELHALL…SHVKPLSATT (614 aa)) the chain is on the extracellular side. Asparagine 51, asparagine 80, asparagine 97, asparagine 123, asparagine 130, asparagine 153, and asparagine 164 each carry an N-linked (GlcNAc...) asparagine glycan. 22 LRR repeats span residues 68–92 (LRHV…VAHL), 93–116 (PLLQ…ISNL), 118–140 (ELRH…LSSG), 141–165 (LVNL…LTNL), 167–188 (QLRH…TYGT), 189–213 (WPVL…IGNL), 215–238 (TLRE…IGNL), 239–262 (SELV…IGKL), 263–285 (QKLD…ELGL), 286–309 (ISSL…SFSQ), 311–334 (KNLT…IGEM), 335–358 (PELE…LGEN), 359–382 (GRLV…MCSG), 384–406 (RLMT…LGKC), 407–430 (ESLT…LFGL), 431–456 (PKLS…GVSG), 458–479 (LGQI…IGNL), 480–503 (SGVQ…IGRL), 505–527 (QLSK…ISRC), 528–551 (KLLT…LTGM), 552–575 (KILN…IASM), and 577–600 (SLTS…QFSY). Residues asparagine 212 and asparagine 237 are each glycosylated (N-linked (GlcNAc...) asparagine). Asparagine 312 and asparagine 346 each carry an N-linked (GlcNAc...) asparagine glycan. A glycan (N-linked (GlcNAc...) asparagine) is linked at asparagine 420. N-linked (GlcNAc...) asparagine glycosylation occurs at asparagine 478. 3 N-linked (GlcNAc...) asparagine glycosylation sites follow: asparagine 558, asparagine 587, and asparagine 602. A helical membrane pass occupies residues 637–657 (KLLLVLGLLFCSMVFAIVAII). Over 658 to 1002 (KARSLRNASE…SGSPPDLLSN (345 aa)) the chain is Cytoplasmic. Threonine 682 is modified (phosphothreonine). One can recognise a Protein kinase domain in the interval 690–967 (LKEDNIIGKG…VQILTEIPKI (278 aa)). ATP is bound by residues 696 to 704 (IGKGGAGIV) and lysine 718. 2 positions are modified to phosphotyrosine: tyrosine 765 and tyrosine 803. The Proton acceptor role is filled by aspartate 816. Serine 851 is subject to Phosphoserine. Phosphotyrosine is present on residues tyrosine 859 and tyrosine 866. A Phosphothreonine modification is found at threonine 867. The segment at 969-1002 (LSKQQAAESDVTEKAPAINESSPDSGSPPDLLSN) is disordered. Residues 989–1002 (SSPDSGSPPDLLSN) show a composition bias toward low complexity.

It belongs to the protein kinase superfamily. Ser/Thr protein kinase family. Interacts with BAM1 and CLV1. Binds to the CLV3, CLE11, CLE18, CLE19, CLE22, CLE25, CLE26, CLE40, CLE41 and CLE42 mature peptides, probably via its extracellular leucine-rich repeat region. As to expression, expressed in seedlings, roots, rosette leaves, stems, inflorescences, flowers and siliques.

Its subcellular location is the cell membrane. The enzyme catalyses L-seryl-[protein] + ATP = O-phospho-L-seryl-[protein] + ADP + H(+). It catalyses the reaction L-threonyl-[protein] + ATP = O-phospho-L-threonyl-[protein] + ADP + H(+). Functionally, necessary for male gametophyte development, as well as ovule specification and function. Involved in cell-cell communication process required during early anther development, and regulating cell division and differentiation to organize cell layers. Required for the development of high-ordered vascular strands within the leaf and a correlated control of leaf shape, size and symmetry. May regulate the CLV1-dependent CLV3-mediated signaling in meristems maintenance. The protein is Leucine-rich repeat receptor-like serine/threonine-protein kinase BAM2 (BAM2) of Arabidopsis thaliana (Mouse-ear cress).